Reading from the N-terminus, the 390-residue chain is DNA replication and repair protein RecF (390 aa).

30–37 contacts ATP; that stretch reads GDNAQGKS.

The protein belongs to the RecF family.

Its subcellular location is the cytoplasm. Functionally, the RecF protein is involved in DNA metabolism; it is required for DNA replication and normal SOS inducibility. RecF binds preferentially to single-stranded, linear DNA. It also seems to bind ATP. This Trichodesmium erythraeum (strain IMS101) protein is DNA replication and repair protein RecF.